A 483-amino-acid polypeptide reads, in one-letter code: UDP-N-acetylmuramate--L-alanine ligase (483 aa).

ATP is bound at residue 122 to 128 (GSHGKTT).

It belongs to the MurCDEF family.

The protein localises to the cytoplasm. It carries out the reaction UDP-N-acetyl-alpha-D-muramate + L-alanine + ATP = UDP-N-acetyl-alpha-D-muramoyl-L-alanine + ADP + phosphate + H(+). The protein operates within cell wall biogenesis; peptidoglycan biosynthesis. Cell wall formation. The chain is UDP-N-acetylmuramate--L-alanine ligase from Synechococcus sp. (strain CC9311).